The sequence spans 501 residues: Acetyl-coenzyme A carboxylase carboxyl transferase subunit beta, chloroplastic (501 aa).

Residues 231 to 501 (LWIECENCYG…LIQNEKESRS (271 aa)) enclose the CoA carboxyltransferase N-terminal domain. Zn(2+) contacts are provided by Cys-235, Cys-238, Cys-254, and Cys-257. The segment at 235–257 (CENCYGLNYKKILKSKMNICEHC) adopts a C4-type zinc-finger fold.

The protein belongs to the AccD/PCCB family. Acetyl-CoA carboxylase is a heterohexamer composed of biotin carboxyl carrier protein, biotin carboxylase and 2 subunits each of ACCase subunit alpha and ACCase plastid-coded subunit beta (accD). The cofactor is Zn(2+).

It is found in the plastid. The protein resides in the chloroplast stroma. It catalyses the reaction N(6)-carboxybiotinyl-L-lysyl-[protein] + acetyl-CoA = N(6)-biotinyl-L-lysyl-[protein] + malonyl-CoA. Its pathway is lipid metabolism; malonyl-CoA biosynthesis; malonyl-CoA from acetyl-CoA: step 1/1. In terms of biological role, component of the acetyl coenzyme A carboxylase (ACC) complex. Biotin carboxylase (BC) catalyzes the carboxylation of biotin on its carrier protein (BCCP) and then the CO(2) group is transferred by the transcarboxylase to acetyl-CoA to form malonyl-CoA. The sequence is that of Acetyl-coenzyme A carboxylase carboxyl transferase subunit beta, chloroplastic from Lotus japonicus (Lotus corniculatus var. japonicus).